A 502-amino-acid polypeptide reads, in one-letter code: Cobyric acid synthase (502 aa).

One can recognise a GATase cobBQ-type domain in the interval 260-433 (ILRVAVCAIP…WHGSLESDGF (174 aa)). The Nucleophile role is filled by C341. Residue H425 is part of the active site.

The protein belongs to the CobB/CobQ family. CobQ subfamily.

It functions in the pathway cofactor biosynthesis; adenosylcobalamin biosynthesis. Functionally, catalyzes amidations at positions B, D, E, and G on adenosylcobyrinic A,C-diamide. NH(2) groups are provided by glutamine, and one molecule of ATP is hydrogenolyzed for each amidation. The chain is Cobyric acid synthase from Streptomyces avermitilis (strain ATCC 31267 / DSM 46492 / JCM 5070 / NBRC 14893 / NCIMB 12804 / NRRL 8165 / MA-4680).